The primary structure comprises 103 residues: Integration host factor subunit beta (103 aa).

The protein belongs to the bacterial histone-like protein family. As to quaternary structure, heterodimer of an alpha and a beta chain.

In terms of biological role, this protein is one of the two subunits of integration host factor, a specific DNA-binding protein that functions in genetic recombination as well as in transcriptional and translational control. This is Integration host factor subunit beta from Sinorhizobium medicae (strain WSM419) (Ensifer medicae).